Here is a 184-residue protein sequence, read N- to C-terminus: Ethylene-responsive transcription factor ERF010 (184 aa).

Positions Pro-20–Pro-77 form a DNA-binding region, AP2/ERF. Residues Gln-123–His-184 form a disordered region. Residues Leu-161–Asp-172 show a composition bias toward basic and acidic residues. Over residues Glu-174–His-184 the composition is skewed to acidic residues.

It belongs to the AP2/ERF transcription factor family. ERF subfamily.

It is found in the nucleus. In terms of biological role, probably acts as a transcriptional activator. Binds to the GCC-box pathogenesis-related promoter element. May be involved in the regulation of gene expression by stress factors and by components of stress signal transduction pathways. This Arabidopsis thaliana (Mouse-ear cress) protein is Ethylene-responsive transcription factor ERF010 (ERF010).